Consider the following 1705-residue polypeptide: MRPLILLAALLWLQDSLAQEDVCSSLDGSPDRQGGGPPLSVSVTSRGRPTSLFLSWVAAEPGGFDYALCLRAMNLSGFPEGQQLQAHTNESSFEFHGLVPGSRYQLELTVLRPCWQNVTITLTARTAPTVVRGLQLHSTGSPASLEASWSDASGDQDSYQLLLYHPESHTLACNVSVSPDTLSYNFGDLLPGSQYVLEVITWAGSLHAKTSILQWTEPVPPDHLRVRALGTSSLQAFWNSSEGATWFHLILTDLLEGTNLTKVVRQGISTHTFLRLSPGTPYQLKICAAAGPHQIWGPNATEWTYPSYPSDLVLTPLWNELWASWKAGQGARDGYVLKLSGPVENTTTLGPEECNAVFPGPLPPGHYTLGLRVLAGPYDAWVEGSIWLAESAARPMEVPGARLWLEGLEATKQPGRRALLYSVDAPGLLGNISVSSGATHVTFCGLVPGAHYRVDIASSMGDITQSLTGYTSPLPPQSLEIISRNSPSDLTIGWAPAPGQMEGYKVTWHQDGSQRSPGDLVDLGPDISSLTLKSLVPGSCYTVSAWAWSGNLSSDSQKIHSCTRPAPPTNLSLGFAHQPATLRASWCHPPGGRDAFQLRLYRLRPLTLESEKILSQEAQNFSWAQLPAGYEFQVQLSTLWGSEESGSANTTGWTPPSAPTLVNVTSEAPTQLHVSWVHAAGDRSSYQVTLYQESTRTATSIVGPKADSTSFWGLTPGTKYKVEAISWAGPLYTAAANVSAWTYPLTPNELLASMQAGSAVVNLAWPSGPLGRGTCHAQLSDAGHLSWEQPLSLGQDLLMLRNLIPGHTVSLSVKCRAGPLQASTHPLVLSVEPGPVEDVFCQPEATYLSLNWTMPTGDVAVCLVEVEQLVPGGSAHFVFQVNTSEDALLLPNLTPTTSYRLSLTVLGGNRQWSRAVTLVCTTSAEVWHPPELAEAPQVELGTGMGVTVTRGMFGKDDGQIQWYGIIATINMTLAQPSQEAINHTWYDHYYRGHDSYLALLFPNPFYPEPWAVPRSWTVPVGTEDCDNTQEICNGHLKPGFQYRFSIAAFSRLSSPETILAFSAFSEPQASISLVAMPLTVMMGTVVGCIIIVCAVLCLLCRRGLKGPRSEKNGFSQELMPYNLWRTHRPIPSHSFRQSYEAKSARAHQAFFQEFEELKEVGKDQPRLEAEHPANITKNRYPHVLPYDHSRVRLTQLSGEPHSDYINANFIPGYSHPQEIIATQGPLKKTVEDFWRLVWEQQVHVIIMLTVGMENGRVLCEHYWPVNSTPVTHGHITTHLLAEESEDEWTRREFQLQHGAEQKQRRVKQLQFTTWPDHSVPEAPSSLLAFVELVQEEVKATQGKGPILVHCSAGVGRTGTFVALLPAVRQLEEEQVVDVFNTVYILRLHRPLMIQTLSQYIFLHSCLLNKILEGPSDASDSGPIPVMNFAQACAKRAANANAGFLKEYRLLKQAIKDETGSLLPSPDYNQNSIASCHHSQEQLALVEESPADNMLAASLFPGGPSGRDHVVLTGSAGPKELWEMVWEHGAYVLVSLGLPDTKEKPQDIWPMEMQPIVTDMVTVHRVAESNTAGWPSTLIRVIHGDSGTERQVQCLQFPHCETGSELPANTLLTFLDAVGQCCSRGNSKKPGTLLSHSSKVTNQLSTFLAMEQLLQQAGTERTVDVFSVALKQTQACAVKTPTLEQYIYLYNCLNSALRNRLPRARK.

A signal peptide spans 1–18 (MRPLILLAALLWLQDSLA). Over 19-1077 (QEDVCSSLDG…QASISLVAMP (1059 aa)) the chain is Extracellular. A disordered region spans residues 24–44 (SSLDGSPDRQGGGPPLSVSVT). Fibronectin type-III domains follow at residues 37–129 (PPLS…TAPT), 130–222 (VVRG…VPPD), 218–305 (PVPP…EWTY), 306–388 (PSYP…SIWL), 393–454 (ARPM…HYRV), 475–569 (PPQS…APPT), 565–654 (PAPP…TGWT), 655–749 (PPSA…TPNE), 744–831 (PLTP…VLSV), and 832–926 (EPGP…SAEV). Asparagine 74, asparagine 89, asparagine 117, asparagine 174, asparagine 239, asparagine 259, asparagine 299, asparagine 345, asparagine 431, asparagine 551, asparagine 570, asparagine 620, asparagine 649, asparagine 663, and asparagine 737 each carry an N-linked (GlcNAc...) asparagine glycan. N-linked (GlcNAc...) asparagine glycans are attached at residues asparagine 851, asparagine 882, asparagine 970, and asparagine 982. The helical transmembrane segment at 1078-1100 (LTVMMGTVVGCIIIVCAVLCLLC) threads the bilayer. The Cytoplasmic segment spans residues 1101-1705 (RRGLKGPRSE…LRNRLPRARK (605 aa)). Tyrosine-protein phosphatase domains are found at residues 1150–1409 (FFQE…LLNK) and 1427–1695 (NFAQ…LNSA). Substrate-binding positions include aspartate 1316, 1350–1356 (CSAGVGR), and glutamine 1394. Residue cysteine 1350 is the Phosphocysteine intermediate of the active site.

This sequence belongs to the protein-tyrosine phosphatase family. Receptor class 3 subfamily.

Its subcellular location is the membrane. The catalysed reaction is O-phospho-L-tyrosyl-[protein] + H2O = L-tyrosyl-[protein] + phosphate. Its function is as follows. Protein tyrosine phosphatase that acts as a regulator of energy metabolism by mediating dephosphorylation of insulin receptor (Insr). Prevents decarboxylation of osteocalcin (Bglap and Bglap2) via an indirect mechanism: dephosphorylation of insulin receptor prevents insulin signaling-dependent decarboxylation of osteocalcin, preventing the hormone activity of osteocalcin. May play a role in the maintenance of pluripotency. In Mus musculus (Mouse), this protein is Receptor-type tyrosine-protein phosphatase V (Ptprv).